The primary structure comprises 569 residues: Potassium-transporting ATPase potassium-binding subunit (569 aa).

10 helical membrane-spanning segments follow: residues 3–23 (LMEY…SPVL), 68–88 (AASL…VLML), 136–156 (VGLA…AVAV), 179–199 (VLYV…GQGV), 259–279 (LQML…GGAV), 284–304 (HAWT…CSLY), 384–404 (GLYG…LMVG), 422–442 (AMLA…VAAV), 490–510 (IALA…GVAG), and 534–554 (LLLT…ALAL).

It belongs to the KdpA family. The system is composed of three essential subunits: KdpA, KdpB and KdpC.

Its subcellular location is the cell inner membrane. In terms of biological role, part of the high-affinity ATP-driven potassium transport (or Kdp) system, which catalyzes the hydrolysis of ATP coupled with the electrogenic transport of potassium into the cytoplasm. This subunit binds the periplasmic potassium ions and delivers the ions to the membrane domain of KdpB through an intramembrane tunnel. This Nitratidesulfovibrio vulgaris (strain ATCC 29579 / DSM 644 / CCUG 34227 / NCIMB 8303 / VKM B-1760 / Hildenborough) (Desulfovibrio vulgaris) protein is Potassium-transporting ATPase potassium-binding subunit.